Here is a 298-residue protein sequence, read N- to C-terminus: Ethanolamine ammonia-lyase small subunit (298 aa).

Positions 210, 231, and 261 each coordinate adenosylcob(III)alamin.

Belongs to the EutC family. The basic unit is a heterodimer which dimerizes to form tetramers. The heterotetramers trimerize; 6 large subunits form a core ring with 6 small subunits projecting outwards. Adenosylcob(III)alamin is required as a cofactor.

Its subcellular location is the bacterial microcompartment. It catalyses the reaction ethanolamine = acetaldehyde + NH4(+). It functions in the pathway amine and polyamine degradation; ethanolamine degradation. Its function is as follows. Catalyzes the deamination of various vicinal amino-alcohols to oxo compounds. Allows this organism to utilize ethanolamine as the sole source of nitrogen and carbon in the presence of external vitamin B12. The protein is Ethanolamine ammonia-lyase small subunit of Salmonella heidelberg (strain SL476).